Here is a 472-residue protein sequence, read N- to C-terminus: WAS protein family homolog DDB_G0292878 (472 aa).

Residues 279 to 472 (LPTYDNSNSG…ESDTDSSEWE (194 aa)) form a disordered region. Residues 282–299 (YDNSNSGSAPVNQSSGGD) are compositionally biased toward polar residues. Residues 300–314 (NNVNNNNNNNNSNNS) show a composition bias toward low complexity. The span at 320 to 356 (PPQPTNAPPPPPPPPQSANAPPPPPPPPVSAPPPFNP) shows a compositional bias: pro residues. Over residues 363-373 (NDDDDDDDDDN) the composition is skewed to acidic residues. Gly residues predominate over residues 374 to 383 (GGGGGPGGAI). The WH2 domain maps to 382 to 401 (AIGDLLADIRRGHKNRLKKA). Positions 457–472 (TDDQDGESDTDSSEWE) are enriched in acidic residues.

It belongs to the WASH1 family.

In terms of biological role, acts as a nucleation-promoting factor by activating the Arp2/3 complex to induce actin polymerization. This is WAS protein family homolog DDB_G0292878 from Dictyostelium discoideum (Social amoeba).